The following is a 302-amino-acid chain: GTPase Era (302 aa).

The Era-type G domain maps to Lys4–Glu171. A G1 region spans residues Gly12 to Ser19. Gly12 to Ser19 serves as a coordination point for GTP. The interval Gln38–Asn42 is G2. A G3 region spans residues Asp59–Gly62. GTP-binding positions include Asp59–Ile63 and Asn121–Asp124. The G4 stretch occupies residues Asn121–Asp124. A G5 region spans residues Ile150–Ala152. The KH type-2 domain maps to Leu202–Lys280.

Belongs to the TRAFAC class TrmE-Era-EngA-EngB-Septin-like GTPase superfamily. Era GTPase family. As to quaternary structure, monomer.

The protein resides in the cytoplasm. It is found in the cell membrane. Its function is as follows. An essential GTPase that binds both GDP and GTP, with rapid nucleotide exchange. Plays a role in 16S rRNA processing and 30S ribosomal subunit biogenesis and possibly also in cell cycle regulation and energy metabolism. The polypeptide is GTPase Era (Thermoanaerobacter pseudethanolicus (strain ATCC 33223 / 39E) (Clostridium thermohydrosulfuricum)).